We begin with the raw amino-acid sequence, 271 residues long: Small ribosomal subunit protein uS2 (271 aa).

This sequence belongs to the universal ribosomal protein uS2 family.

The protein is Small ribosomal subunit protein uS2 of Wolbachia pipientis subsp. Culex pipiens (strain wPip).